We begin with the raw amino-acid sequence, 145 residues long: LIM domain only protein 3 (145 aa).

LIM zinc-binding domains follow at residues K11–V73 and G75–K137.

The protein is LIM domain only protein 3 of Danio rerio (Zebrafish).